We begin with the raw amino-acid sequence, 187 residues long: Putative manganese efflux pump MntP (187 aa).

6 consecutive transmembrane segments (helical) span residues 8 to 28 (FLSI…GFII), 39 to 59 (IALF…LTGL), 65 to 85 (LANF…GKMI), 106 to 126 (LFAL…GLSV), 131 to 151 (ILLA…IGVF), and 166 to 186 (ILGG…GLII).

The protein belongs to the MntP (TC 9.B.29) family.

The protein resides in the cell inner membrane. In terms of biological role, probably functions as a manganese efflux pump. In Rippkaea orientalis (strain PCC 8801 / RF-1) (Cyanothece sp. (strain PCC 8801)), this protein is Putative manganese efflux pump MntP.